Here is a 284-residue protein sequence, read N- to C-terminus: RNase adapter protein RapZ (284 aa).

An ATP-binding site is contributed by 8 to 15 (GRSGSGKS). GTP is bound at residue 56–59 (DVRN). The RNA-binding stretch occupies residues 266 to 284 (RSRGKNVQLRHRTLEKRKE).

It belongs to the RapZ-like family. RapZ subfamily. In terms of assembly, homotrimer.

Modulates the synthesis of GlmS, by affecting the processing and stability of the regulatory small RNA GlmZ. When glucosamine-6-phosphate (GlcN6P) concentrations are high in the cell, RapZ binds GlmZ and targets it to cleavage by RNase E. Consequently, GlmZ is inactivated and unable to activate GlmS synthesis. Under low GlcN6P concentrations, RapZ is sequestered and inactivated by an other regulatory small RNA, GlmY, preventing GlmZ degradation and leading to synthesis of GlmS. The chain is RNase adapter protein RapZ from Hamiltonella defensa subsp. Acyrthosiphon pisum (strain 5AT).